The sequence spans 633 residues: 1-deoxy-D-xylulose-5-phosphate synthase (633 aa).

Thiamine diphosphate contacts are provided by residues His-72 and 113–115; that span reads GHS. A Mg(2+)-binding site is contributed by Asp-144. Residues 145–146, Asn-173, Tyr-284, and Glu-367 each bind thiamine diphosphate; that span reads GA. Asn-173 serves as a coordination point for Mg(2+).

Belongs to the transketolase family. DXPS subfamily. As to quaternary structure, homodimer. The cofactor is Mg(2+). It depends on thiamine diphosphate as a cofactor.

It catalyses the reaction D-glyceraldehyde 3-phosphate + pyruvate + H(+) = 1-deoxy-D-xylulose 5-phosphate + CO2. Its pathway is metabolic intermediate biosynthesis; 1-deoxy-D-xylulose 5-phosphate biosynthesis; 1-deoxy-D-xylulose 5-phosphate from D-glyceraldehyde 3-phosphate and pyruvate: step 1/1. Functionally, catalyzes the acyloin condensation reaction between C atoms 2 and 3 of pyruvate and glyceraldehyde 3-phosphate to yield 1-deoxy-D-xylulose-5-phosphate (DXP). In Lysinibacillus sphaericus (strain C3-41), this protein is 1-deoxy-D-xylulose-5-phosphate synthase.